The chain runs to 710 residues: Protein Smaug homolog 1 (710 aa).

Disordered regions lie at residues A276–E319 and N441–L476. A compositionally biased stretch (polar residues) spans Q309–D318. Residues E319–K379 enclose the SAM domain.

The protein belongs to the SMAUG family.

It localises to the cytoplasm. The protein resides in the cell projection. The protein localises to the dendrite. It is found in the synapse. Its subcellular location is the synaptosome. In terms of biological role, acts as a translational repressor. This Xenopus laevis (African clawed frog) protein is Protein Smaug homolog 1 (samd4a).